Consider the following 803-residue polypeptide: Leucine--tRNA ligase (803 aa).

The 'HIGH' region signature appears at 40–51; it reads PYPSGAGLHVGH. The short motif at 575-579 is the 'KMSKS' region element; the sequence is KMSKS. An ATP-binding site is contributed by Lys-578.

Belongs to the class-I aminoacyl-tRNA synthetase family.

The protein resides in the cytoplasm. It catalyses the reaction tRNA(Leu) + L-leucine + ATP = L-leucyl-tRNA(Leu) + AMP + diphosphate. In Listeria innocua serovar 6a (strain ATCC BAA-680 / CLIP 11262), this protein is Leucine--tRNA ligase.